The sequence spans 1037 residues: Glycine dehydrogenase (decarboxylating) A, mitochondrial (1037 aa).

Residues 1–66 (MERARRLANK…LNGFGSQVRT (66 aa)) constitute a mitochondrion transit peptide. N6-(pyridoxal phosphate)lysine is present on Lys-773.

It belongs to the GcvP family. In terms of assembly, homodimer. The glycine cleavage system is composed of four proteins: P, T, L and H. The cofactor is pyridoxal 5'-phosphate. As to expression, expressed in leaves, stems and roots.

The protein localises to the mitochondrion. It carries out the reaction N(6)-[(R)-lipoyl]-L-lysyl-[glycine-cleavage complex H protein] + glycine + H(+) = N(6)-[(R)-S(8)-aminomethyldihydrolipoyl]-L-lysyl-[glycine-cleavage complex H protein] + CO2. Functionally, the glycine cleavage system catalyzes the degradation of glycine. The P protein binds the alpha-amino group of glycine through its pyridoxal phosphate cofactor; CO(2) is released and the remaining methylamine moiety is then transferred to the lipoamide cofactor of the H protein. The polypeptide is Glycine dehydrogenase (decarboxylating) A, mitochondrial (GDCSPA) (Flaveria pringlei).